The sequence spans 801 residues: Ent-copalyl diphosphate synthase, chloroplastic (801 aa).

Residue K241 participates in substrate binding. Positions 373 and 375 each coordinate Mg(2+). The short motif at 373–376 is the DXDD motif element; that stretch reads DIDD. Residue K459 coordinates substrate.

This sequence belongs to the terpene synthase family. Requires Mg(2+) as cofactor.

The protein localises to the plastid. It is found in the chloroplast. It carries out the reaction (2E,6E,10E)-geranylgeranyl diphosphate = ent-copalyl diphosphate. It functions in the pathway plant hormone biosynthesis; gibberellin biosynthesis. Functionally, catalyzes the conversion of geranylgeranyl diphosphate to the gibberellin precursor ent-copalyl diphosphate. This is Ent-copalyl diphosphate synthase, chloroplastic from Pisum sativum (Garden pea).